Reading from the N-terminus, the 163-residue chain is Choriogonadotropin subunit beta (163 aa).

The N-terminal stretch at M1–A20 is a signal peptide. 6 disulfides stabilise this stretch: C29–C76, C43–C91, C46–C129, C54–C107, C58–C109, and C112–C119. N50 carries N-linked (GlcNAc...) asparagine glycosylation. N-linked (GlcNAc...) asparagine glycosylation occurs at N124. The span at Q135 to Q151 shows a compositional bias: polar residues. Positions Q135–Q163 are disordered. Residue S139 is glycosylated (O-linked (GalNAc...) serine). N-linked (GlcNAc...) asparagine glycosylation occurs at N145. An O-linked (GalNAc...) serine glycan is attached at S150.

The protein belongs to the glycoprotein hormones subunit beta family. In terms of assembly, heterodimer of a common alpha chain and a unique beta chain which confers biological specificity to thyrotropin, lutropin, follitropin and gonadotropin.

The protein resides in the secreted. Stimulates the ovaries to synthesize the steroids that are essential for the maintenance of pregnancy. The protein is Choriogonadotropin subunit beta (CGB) of Saimiri boliviensis boliviensis (Bolivian squirrel monkey).